The following is a 429-amino-acid chain: Ribosomal RNA small subunit methyltransferase B (429 aa).

Residues cysteine 254–lysine 260, aspartate 277, aspartate 303, and aspartate 322 contribute to the S-adenosyl-L-methionine site. Cysteine 375 functions as the Nucleophile in the catalytic mechanism.

The protein belongs to the class I-like SAM-binding methyltransferase superfamily. RsmB/NOP family.

It is found in the cytoplasm. It catalyses the reaction cytidine(967) in 16S rRNA + S-adenosyl-L-methionine = 5-methylcytidine(967) in 16S rRNA + S-adenosyl-L-homocysteine + H(+). In terms of biological role, specifically methylates the cytosine at position 967 (m5C967) of 16S rRNA. This Escherichia coli (strain SMS-3-5 / SECEC) protein is Ribosomal RNA small subunit methyltransferase B.